A 355-amino-acid chain; its full sequence is Double-stranded RNA-binding protein 4 (355 aa).

DRBM domains are found at residues 4–73 and 82–150; these read VYKG…SLTP and AYKN…SIKN. The segment covering 149 to 188 has biased composition (polar residues); it reads KNGNSNQTGSPTLPSERQEDVNSNVKSSPQEIHSQPSSKV. The segment at 149–193 is disordered; it reads KNGNSNQTGSPTLPSERQEDVNSNVKSSPQEIHSQPSSKVVMTPD.

Heterodimer with DRB1 or DRB5. Interacts with DCL4 and cauliflower mosaic virus (CaMV) transactivator/viroplasmin protein. Interaction with CaMV transactivator/viroplasmin protein inhibits RNA silencing ability of DRB4. In terms of tissue distribution, expressed in roots, leaf vasculature, shoot apical meristem (SAM) and developing anthers.

It is found in the nucleus. In terms of biological role, double-stranded RNA-binding protein involved in RNA-mediated post-transcriptional gene silencing (PTGS). Functions in the trans-acting small interfering RNAs (ta-siRNAs) biogenesis by binding and assisting DICER-LIKE 4 (DCL4). Required for DCL4 activity. Required for the 21 nucleotide ta-siRNAs production of the TAS3 transcript in leaves but not in flowers. Plays an important role in silencing RNA of both DNA and RNA viruses. Involved with argonaute 7 (AGO7) and RDR6 in turnip crinkle virus (TCV) silencing. May not be directly involved in viral siRNA production. May stabilize the 21 nucleotide viral siRNAs and deliver them to the RISC complex. Targeted by the viral silencing suppressor (VSR) transactivator/viroplasmin (TAV) protein of the cauliflower mosaic virus (CaMV) that inactivates DRB4 function in RNA silencing. Probably not involved in the guide strand selection from RNA duplexes. Involved in leaf morphology through its function in ta-siRNA-mediated silencing. This is Double-stranded RNA-binding protein 4 (DBR4) from Arabidopsis thaliana (Mouse-ear cress).